The sequence spans 803 residues: Phenylalanine--tRNA ligase beta subunit (803 aa).

One can recognise a tRNA-binding domain in the interval 39–150; the sequence is AKVLAPFTIA…ADAPVGAAYA (112 aa). A B5 domain is found at 400 to 475; the sequence is ADDKIIDFPL…RIVGVDKVPL (76 aa). Mg(2+)-binding residues include Asp453, Asp459, Glu462, and Glu463. Residues 709-802 enclose the FDX-ACB domain; the sequence is SAFHPVSRDF…VTKKTGGSLR (94 aa).

This sequence belongs to the phenylalanyl-tRNA synthetase beta subunit family. Type 1 subfamily. As to quaternary structure, tetramer of two alpha and two beta subunits. Mg(2+) is required as a cofactor.

Its subcellular location is the cytoplasm. It carries out the reaction tRNA(Phe) + L-phenylalanine + ATP = L-phenylalanyl-tRNA(Phe) + AMP + diphosphate + H(+). In Rhodopseudomonas palustris (strain ATCC BAA-98 / CGA009), this protein is Phenylalanine--tRNA ligase beta subunit.